The primary structure comprises 213 residues: High frequency lysogenization protein HflD homolog (213 aa).

The stretch at 79–122 (QGLNAELTRYTLSLMVLERKLSSAKGALNTLGDRINGLQRQLDH) forms a coiled coil.

This sequence belongs to the HflD family.

The protein resides in the cytoplasm. It localises to the cell inner membrane. The sequence is that of High frequency lysogenization protein HflD homolog from Salmonella dublin (strain CT_02021853).